We begin with the raw amino-acid sequence, 264 residues long: Iodotyrosine deiodinase (264 aa).

FMN contacts are provided by residues Arg75–Arg79 and Ser103–Gly104. The 3-iodo-L-tyrosine site is built by Ala105, Glu132, Tyr136, and Lys157. Residues Thr212–Thr214 and Arg254 contribute to the FMN site.

The protein belongs to the nitroreductase family. It depends on FMN as a cofactor.

The catalysed reaction is 2 iodide + L-tyrosine + 2 NADP(+) = 3,5-diiodo-L-tyrosine + 2 NADPH + H(+). It carries out the reaction iodide + L-tyrosine + NADP(+) = 3-iodo-L-tyrosine + NADPH. It catalyses the reaction 3-iodo-L-tyrosine + iodide + NADP(+) = 3,5-diiodo-L-tyrosine + NADPH + H(+). The enzyme catalyses L-tyrosine + chloride + NADP(+) = 3-chloro-L-tyrosine + NADPH. The catalysed reaction is bromide + L-tyrosine + NADP(+) = 3-bromo-L-tyrosine + NADPH. Its function is as follows. Catalyzes the dehalogenation of halotyrosines such as 3,5-diiodo-L-tyrosine. Likely to also catalyze the dehalogenation of other halotyrosines such as 3-bromo-L-tyrosine, 3-chloro-L-tyrosine and 3-iodo-L-tyrosine. The protein is Iodotyrosine deiodinase of Nematostella vectensis (Starlet sea anemone).